Consider the following 572-residue polypeptide: Arginine--tRNA ligase (572 aa).

The 'HIGH' region signature appears at 122-132 (PNLAKEMHVGH).

The protein belongs to the class-I aminoacyl-tRNA synthetase family. In terms of assembly, monomer.

The protein resides in the cytoplasm. It carries out the reaction tRNA(Arg) + L-arginine + ATP = L-arginyl-tRNA(Arg) + AMP + diphosphate. This chain is Arginine--tRNA ligase, found in Neisseria meningitidis serogroup B (strain ATCC BAA-335 / MC58).